The following is a 389-amino-acid chain: MTARKSLDRYRRIVIKIGSALLVDRKTGLKKAWLDGMCADIAALKAKGVDVLVVSSGAIALGRSVLDLPSGALKLEESQAAAAVGQISLARAWSESLSHDDIVAGQILLTLGDTEERRRYLNARATINQLLKIGAVPIINENDTVATSEIRYGDNDRLAARVATMTGADLLILLSDIDGLYTAPPHLDPDAKFLETIADITPEIEAMAGGAASELSRGGMRTKIDAGKIATGAGCAMIIASGKTDRPLNAIANGARSSWFAPSGTPVTARKTWIAGQLQPAGELHVDEGAVTALGAGKSLLPAGVRKVTGHFGRGDTIAVIGPSGREIARGLVGYDAEEARQITGRKSAEIEAILGYAGRAAMVHRDDLVMTASVKTKAEKLKKDEAHA.

K16 contacts ATP. 3 residues coordinate substrate: S56, D143, and N155. 175–176 (SD) provides a ligand contact to ATP. The PUA domain occupies 281 to 358 (AGELHVDEGA…AEIEAILGYA (78 aa)).

This sequence belongs to the glutamate 5-kinase family.

Its subcellular location is the cytoplasm. The enzyme catalyses L-glutamate + ATP = L-glutamyl 5-phosphate + ADP. Its pathway is amino-acid biosynthesis; L-proline biosynthesis; L-glutamate 5-semialdehyde from L-glutamate: step 1/2. In terms of biological role, catalyzes the transfer of a phosphate group to glutamate to form L-glutamate 5-phosphate. The sequence is that of Glutamate 5-kinase from Rhizobium rhizogenes (strain K84 / ATCC BAA-868) (Agrobacterium radiobacter).